The following is a 398-amino-acid chain: MDWKITIFTYNLAMKASDSEAVHNMLNGMIDDHTHLVAIGLQEVAHSETIGGAVLTWATTIASWMNTNGRMVLLAKTFQATNQVLIFGRKQLIGQIKRIDYRFQRNTMGGLTGHKGSIGVRLQLASPYSIVFVDSHFIHGPENYGKRVEQYHTNRNCSFPEDKSVRAAFWFGDFNFRVEEDVNTVIRKIKNGTHLELLDTREQLKRALVERDAFIGFHEQPVTFEPTYRVTVGTTEQDGKRVPSWTDRILYKGDGITGLSYTNNKKAVASDHLPVVAMFRVTAPAAPKPQWEVIFEHLPTWYTSIPLVGRFQVNELYYKENGSYRDWIGVFPSSINDCTTATNWIYAATCFEQVIEGSKFLACEFNNIPAGNYRLGYFSCHLHCLVGLSKVFQIVEQP.

This sequence belongs to the inositol 1,4,5-trisphosphate 5-phosphatase type II family. As to expression, expressed in tail, cilia, dendrites, axon and male head.

The protein localises to the cytoplasm. Functionally, dephosphorylates a number of phosphatidylinositols. Controls the cellular levels and subcellular distribution of phosphatidylinositol 3,5-bisphosphate and phosphatidylinositol 3,4,5-trisphosphate. Has a role in sperm activation and motility. Influences the localization of the transient receptor potential polycystin (TRPP) complex proteins lov-1 and pkd-2. The protein is Inositol polyphosphate 5-phosphatase of Caenorhabditis elegans.